Consider the following 573-residue polypeptide: DNA ligase (573 aa).

Glu-250 contacts ATP. Residue Lys-252 is the N6-AMP-lysine intermediate of the active site. Residues Arg-257, Arg-272, Glu-301, Phe-342, Arg-432, and Lys-438 each coordinate ATP.

This sequence belongs to the ATP-dependent DNA ligase family. The cofactor is Mg(2+).

It catalyses the reaction ATP + (deoxyribonucleotide)n-3'-hydroxyl + 5'-phospho-(deoxyribonucleotide)m = (deoxyribonucleotide)n+m + AMP + diphosphate.. DNA ligase that seals nicks in double-stranded DNA during DNA replication, DNA recombination and DNA repair. The sequence is that of DNA ligase from Methanococcus maripaludis (strain C7 / ATCC BAA-1331).